The sequence spans 259 residues: UPF0246 protein NMCC_0856 (259 aa).

Belongs to the UPF0246 family.

This is UPF0246 protein NMCC_0856 from Neisseria meningitidis serogroup C (strain 053442).